Consider the following 284-residue polypeptide: Phosphonates import ATP-binding protein PhnC 2 (284 aa).

Positions 5–253 constitute an ABC transporter domain; sequence IEVRGLSKSF…MLRDLYGTEA (249 aa). An ATP-binding site is contributed by 38–45; the sequence is GASGSGKS.

The protein belongs to the ABC transporter superfamily. Phosphonates importer (TC 3.A.1.9.1) family. As to quaternary structure, the complex is composed of two ATP-binding proteins (PhnC), two transmembrane proteins (PhnE) and a solute-binding protein (PhnD).

Its subcellular location is the cell inner membrane. It catalyses the reaction phosphonate(out) + ATP + H2O = phosphonate(in) + ADP + phosphate + H(+). In terms of biological role, part of the ABC transporter complex PhnCDE involved in phosphonates import. Responsible for energy coupling to the transport system. The polypeptide is Phosphonates import ATP-binding protein PhnC 2 (Cupriavidus necator (strain ATCC 17699 / DSM 428 / KCTC 22496 / NCIMB 10442 / H16 / Stanier 337) (Ralstonia eutropha)).